Consider the following 304-residue polypeptide: Glycine--tRNA ligase alpha subunit (304 aa).

The protein belongs to the class-II aminoacyl-tRNA synthetase family. In terms of assembly, tetramer of two alpha and two beta subunits.

The protein localises to the cytoplasm. It catalyses the reaction tRNA(Gly) + glycine + ATP = glycyl-tRNA(Gly) + AMP + diphosphate. The sequence is that of Glycine--tRNA ligase alpha subunit from Serratia proteamaculans (strain 568).